The following is a 122-amino-acid chain: Large ribosomal subunit protein uL14c (122 aa).

It belongs to the universal ribosomal protein uL14 family. In terms of assembly, part of the 50S ribosomal subunit.

It is found in the plastid. It localises to the chloroplast. Functionally, binds to 23S rRNA. This chain is Large ribosomal subunit protein uL14c, found in Fagopyrum esculentum subsp. ancestrale (Wild buckwheat).